The chain runs to 442 residues: N-acetyl-S-alkylcysteine sulfoxide monooxygenase (442 aa).

Residues D58, T95, H145, Y149, S219, and S220 each coordinate FMN.

This sequence belongs to the NtaA/SnaA/DszA monooxygenase family. Homodimer.

The enzyme catalyses (R)-N-acetyl-S-benzyl-L-cysteine sulfoxide + FMNH2 + O2 = N-acetyl-S-hydroxy-L-cysteine + benzaldehyde + FMN + H2O + H(+). The protein operates within amino-acid metabolism. Its function is as follows. Involved in a cysteine salvage pathway from S-alkylcysteine. Catalyzes the C-S bond cleavage in N-acetyl-S-benzyl-L-cysteine sulfoxide leading to N-acetyl-S-hydroxy-L-cysteine and benzaldehyde. This pathway is likely important in the catabolism of alkylated cysteine generated by proteolysis of alkylated glutathione formed in the detoxification of a wide range of electrophiles. Has much less efficient activity with N-acetyl-S-methyl-L-cysteine sulfoxide as substrate. Cannot use S-alkylated L-cysteine sulfones and ketone analogs as substrates, demonstrating that the sulfoxide is required for activity. The sequence is that of N-acetyl-S-alkylcysteine sulfoxide monooxygenase from Bacillus subtilis (strain 168).